The chain runs to 140 residues: Regulator of ribonuclease activity B (140 aa).

The disordered stretch occupies residues 115 to 140 (FEDPNAQDDDEDDGEAIDEDDNGIRH). The segment covering 119-140 (NAQDDDEDDGEAIDEDDNGIRH) has biased composition (acidic residues).

The protein belongs to the RraB family. In terms of assembly, interacts with the C-terminal region of Rne.

The protein resides in the cytoplasm. In terms of biological role, globally modulates RNA abundance by binding to RNase E (Rne) and regulating its endonucleolytic activity. Can modulate Rne action in a substrate-dependent manner by altering the composition of the degradosome. This is Regulator of ribonuclease activity B from Pantoea ananatis (strain LMG 20103).